We begin with the raw amino-acid sequence, 69 residues long: U2-agatoxin-Ao1c (69 aa).

The N-terminal stretch at 1–20 (MKAIISLLLISAMVFSMIEA) is a signal peptide. Positions 21–34 (VPVEEGLQLFEGER) are excised as a propeptide. Intrachain disulfides connect cysteine 36–cysteine 52, cysteine 43–cysteine 57, and cysteine 51–cysteine 67. Leucine 68 is modified (leucine amide).

The protein belongs to the neurotoxin 01 (U2-agtx) family. In terms of tissue distribution, expressed by the venom gland.

The protein resides in the secreted. Functionally, insect active toxin causing rapid but reversible paralysis in crickets. No activity shown in mammals. Does not show effect on mammalian voltage-gated calcium channels. This is U2-agatoxin-Ao1c from Agelena orientalis (Funnel-web spider).